The sequence spans 304 residues: Protein ML (304 aa).

Functionally, blocks host IRF3 and IRF7, thereby inhibiting IFN-beta expression and activation of host antiviral state. The chain is Protein ML from Thogoto virus (isolate SiAr 126) (Tho).